Consider the following 531-residue polypeptide: Peptide chain release factor 3 (531 aa).

A tr-type G domain is found at 13–282 (AKRRTFAIIS…TLIKYSPPPK (270 aa)). GTP contacts are provided by residues 22 to 29 (SHPDAGKT), 90 to 94 (DTPGH), and 144 to 147 (NKLD).

It belongs to the TRAFAC class translation factor GTPase superfamily. Classic translation factor GTPase family. PrfC subfamily.

The protein localises to the cytoplasm. Its function is as follows. Increases the formation of ribosomal termination complexes and stimulates activities of RF-1 and RF-2. It binds guanine nucleotides and has strong preference for UGA stop codons. It may interact directly with the ribosome. The stimulation of RF-1 and RF-2 is significantly reduced by GTP and GDP, but not by GMP. In Psychrobacter arcticus (strain DSM 17307 / VKM B-2377 / 273-4), this protein is Peptide chain release factor 3.